Here is a 613-residue protein sequence, read N- to C-terminus: Zinc metalloproteinase-disintegrin-like EoVMP2 (613 aa).

Residues 1 to 20 (MMQVLLVTICLAVFPYQGSS) form the signal peptide. The propeptide occupies 21–194 (IILESGNVND…EASQLFATSE (174 aa)). Glutamine 195 bears the Pyrrolidone carboxylic acid mark. Residues 201–397 (RYIEFFIVVD…RNPKCMINKP (197 aa)) form the Peptidase M12B domain. Residue glutamate 204 participates in Ca(2+) binding. N-linked (GlcNAc...) asparagine glycosylation is present at asparagine 219. Aspartate 288 contacts Ca(2+). 3 disulfides stabilise this stretch: cysteine 312–cysteine 392, cysteine 352–cysteine 376, and cysteine 354–cysteine 359. Histidine 337 serves as a coordination point for Zn(2+). Residue glutamate 338 is part of the active site. Zn(2+)-binding residues include histidine 341 and histidine 347. N-linked (GlcNAc...) asparagine glycosylation is present at asparagine 375. Ca(2+)-binding residues include cysteine 392, asparagine 395, valine 407, asparagine 410, leucine 412, glutamate 414, glutamate 417, and aspartate 420. Residues 405–491 (PPVCGNGLLE…DCPIDGFHAN (87 aa)) form the Disintegrin domain. Disulfide bonds link cysteine 408–cysteine 437, cysteine 419–cysteine 432, cysteine 421–cysteine 427, cysteine 431–cysteine 454, cysteine 445–cysteine 451, cysteine 450–cysteine 476, cysteine 463–cysteine 483, cysteine 470–cysteine 502, cysteine 495–cysteine 507, cysteine 514–cysteine 564, cysteine 529–cysteine 575, cysteine 542–cysteine 552, cysteine 559–cysteine 601, and cysteine 595–cysteine 606. The D/ECD-tripeptide signature appears at 469–471 (DCD).

This sequence belongs to the venom metalloproteinase (M12B) family. P-III subfamily. P-IIIa sub-subfamily. As to quaternary structure, monomer. The cofactor is Zn(2+). In terms of tissue distribution, expressed by the venom gland.

The protein localises to the secreted. Functionally, snake venom zinc metalloprotease that possesses high hemorrhagic activity. It inhibits collagen-induced platelet aggregation and activates prothrombin (F2). The protein is Zinc metalloproteinase-disintegrin-like EoVMP2 (Svmp3-Eoc22) of Echis ocellatus (Ocellated saw-scaled viper).